The primary structure comprises 206 residues: Large ribosomal subunit protein bL17 (206 aa).

The span at 130 to 141 shows a compositional bias: basic and acidic residues; it reads ERARGTRFEARR. A disordered region spans residues 130–206; the sequence is ERARGTRFEA…SGAGEQNSAN (77 aa). Low complexity-rich tracts occupy residues 160–181 and 189–200; these read TAAA…GAAG and DDSGIGDDSGAG.

This sequence belongs to the bacterial ribosomal protein bL17 family. In terms of assembly, part of the 50S ribosomal subunit. Contacts protein L32.

This Frankia casuarinae (strain DSM 45818 / CECT 9043 / HFP020203 / CcI3) protein is Large ribosomal subunit protein bL17.